Consider the following 501-residue polypeptide: Cytochrome P450 3A6 (501 aa).

Heme is bound at residue cysteine 440.

The protein belongs to the cytochrome P450 family. It depends on heme as a cofactor.

The protein resides in the endoplasmic reticulum membrane. Its subcellular location is the microsome membrane. The enzyme catalyses an organic molecule + reduced [NADPH--hemoprotein reductase] + O2 = an alcohol + oxidized [NADPH--hemoprotein reductase] + H2O + H(+). In terms of biological role, exhibits progesterone 6 beta-hydroxylase activity. This Oryctolagus cuniculus (Rabbit) protein is Cytochrome P450 3A6 (CYP3A6).